A 185-amino-acid chain; its full sequence is MIADIKKDAQERMGKCVEATKNQMAKVRTGRAHPSLLDSIQVSYYGTMTPLNQVANVGIEDARTLSVTVFDRSAIQAVEKAIMSSDLGLNPMSAGATLRIPLPALTEERRKDFIKVVRAEAEGGRVAIRNVRRDAISDVKKLEKAKECTEDDVRRFEDEVQKFTDAHIKKVDEILAAKEIELMEV.

Belongs to the RRF family.

It is found in the cytoplasm. In terms of biological role, responsible for the release of ribosomes from messenger RNA at the termination of protein biosynthesis. May increase the efficiency of translation by recycling ribosomes from one round of translation to another. This chain is Ribosome-recycling factor, found in Shewanella sp. (strain MR-4).